Consider the following 566-residue polypeptide: Autophagy-related protein 22-1 (566 aa).

Residues Y38–L58 form a helical membrane-spanning segment. The N-linked (GlcNAc...) asparagine glycan is linked to N103. Helical transmembrane passes span S110–F130, A146–L168, and S179–A199. N-linked (GlcNAc...) asparagine glycosylation occurs at N200. The next 8 helical transmembrane spans lie at G242–F262, V278–L298, F351–L371, I382–W402, I416–I436, W451–A471, F488–V510, and A519–V539. A disordered region spans residues K547–E566.

This sequence belongs to the ATG22 family.

The protein localises to the vacuole membrane. Vacuolar effluxer which mediate the efflux of amino acids resulting from autophagic degradation. The release of autophagic amino acids allows the maintenance of protein synthesis and viability during nitrogen starvation. This is Autophagy-related protein 22-1 (ATG22-1) from Phaeosphaeria nodorum (strain SN15 / ATCC MYA-4574 / FGSC 10173) (Glume blotch fungus).